We begin with the raw amino-acid sequence, 345 residues long: Phosphoribosylformylglycinamidine cyclo-ligase (345 aa).

The protein belongs to the AIR synthase family.

The protein resides in the cytoplasm. The enzyme catalyses 2-formamido-N(1)-(5-O-phospho-beta-D-ribosyl)acetamidine + ATP = 5-amino-1-(5-phospho-beta-D-ribosyl)imidazole + ADP + phosphate + H(+). It participates in purine metabolism; IMP biosynthesis via de novo pathway; 5-amino-1-(5-phospho-D-ribosyl)imidazole from N(2)-formyl-N(1)-(5-phospho-D-ribosyl)glycinamide: step 2/2. This Prochlorococcus marinus (strain MIT 9313) protein is Phosphoribosylformylglycinamidine cyclo-ligase.